We begin with the raw amino-acid sequence, 1419 residues long: L-2-aminoadipate reductase (1419 aa).

One can recognise a Carrier domain in the interval 880 to 956; the sequence is ETLTATERDI…GLAKEIERMK (77 aa). Ser916 is modified (O-(pantetheine 4'-phosphoryl)serine).

It belongs to the ATP-dependent AMP-binding enzyme family. Pantetheine 4'-phosphate is required as a cofactor.

It is found in the cytoplasm. The enzyme catalyses (S)-2-amino-6-oxohexanoate + NADP(+) + H2O = L-2-aminoadipate + NADPH + 2 H(+). It catalyses the reaction (S)-2-amino-6-oxohexanoate + NAD(+) + H2O = L-2-aminoadipate + NADH + 2 H(+). The catalysed reaction is (S)-2-amino-6-oxohexanoate + AMP + diphosphate + NADP(+) = L-2-aminoadipate + ATP + NADPH + H(+). The protein operates within amino-acid biosynthesis; L-lysine biosynthesis via AAA pathway; L-lysine from L-alpha-aminoadipate (fungal route): step 1/3. Functionally, catalyzes the activation of alpha-aminoadipate by ATP-dependent adenylation and the reduction of activated alpha-aminoadipate by NADPH. The activated alpha-aminoadipate is bound to the phosphopantheinyl group of the enzyme itself before it is reduced to (S)-2-amino-6-oxohexanoate. This is L-2-aminoadipate reductase (lys1) from Schizosaccharomyces pombe (strain 972 / ATCC 24843) (Fission yeast).